A 326-amino-acid chain; its full sequence is Protein MICROTUBULE BINDING PROTEIN 2C (326 aa).

2 stretches are compositionally biased toward polar residues: residues 1–15 (MYEQ…QSDS) and 34–46 (PHQS…SGNE). Disordered regions lie at residues 1–46 (MYEQ…SGNE) and 71–132 (ERSS…KALA). A coiled-coil region spans residues 132–183 (AGAEKEEMSRLREQVNDLQTKLSEKEEVLKSMEMSKNQVNEIQEKLEATNRL).

This sequence belongs to the microtubule binding protein 2C family. In terms of assembly, interacts with STM. In terms of tissue distribution, expressed in seedlings, roots, flowers and developing ovules.

It localises to the cytoplasm. Its subcellular location is the cytoskeleton. Prevents homeodomain proteins (e.g. STM) association to plasmodesmata and, consequently, cell-to-cell transport. Binds to RNA. Alters STM RNA binding capacity. Regulates cytoskeleton (e.g. actin) organization that determinates cell shape. Regulates stomata patterning and drought tolerance. Involved in restricting tobamovirus (e.g. oilseed rape mosaic virus) infectivity, probably by interfering with cell-to-cell virus movement. The protein is Protein MICROTUBULE BINDING PROTEIN 2C of Arabidopsis thaliana (Mouse-ear cress).